A 59-amino-acid chain; its full sequence is Putative conotoxin (59 aa).

The N-terminal stretch at 1–25 is a signal peptide; the sequence is MGMRMMFTVFLLVVLATTVVPITLA. A propeptide spanning residues 26–47 is cleaved from the precursor; that stretch reads SATDGRNAAANARVSPVISKSS.

Belongs to the conotoxin A superfamily. Expressed by the venom duct.

Its subcellular location is the secreted. Acts as a neurotoxin. In Conus imperialis (Imperial cone), this protein is Putative conotoxin.